The chain runs to 314 residues: MRGFNKTTVVTQFILVGFSSLGELQLLLFVIFLLLYLTILVANVTIMAVIRFSWTLHTPMYGFLFILSFSESCYTFVIIPQLLVHLLSDTKTISFMACATQLFFFLGFACTNCLLIAVMGYDRYVAICHPLRYTLIINKRLGLELISLSGATGFFIALVATNLICDMRFCGPNRVNHYFCDMAPVIKLACTDTHVKELALFSLSILVIMVPFLLILISYGFIVNTILKIPSAEGKKAFVTCASHLTVVFVHYGCASIIYLRPKSKSASDKDQLVAVTYTVVTPLLNPLVYSLRNKEVKTALKRVLGMPVATKMS.

At 1 to 26 (MRGFNKTTVVTQFILVGFSSLGELQL) the chain is on the extracellular side. The N-linked (GlcNAc...) asparagine glycan is linked to Asn-5. Residues 27 to 47 (LLFVIFLLLYLTILVANVTIM) traverse the membrane as a helical segment. The Cytoplasmic portion of the chain corresponds to 48–55 (AVIRFSWT). A helical transmembrane segment spans residues 56-76 (LHTPMYGFLFILSFSESCYTF). Over 77–100 (VIIPQLLVHLLSDTKTISFMACAT) the chain is Extracellular. The cysteines at positions 98 and 190 are disulfide-linked. The helical transmembrane segment at 101–121 (QLFFFLGFACTNCLLIAVMGY) threads the bilayer. Over 122–140 (DRYVAICHPLRYTLIINKR) the chain is Cytoplasmic. Residues 141-161 (LGLELISLSGATGFFIALVAT) form a helical membrane-spanning segment. Residues 162–198 (NLICDMRFCGPNRVNHYFCDMAPVIKLACTDTHVKEL) are Extracellular-facing. Residues 199 to 218 (ALFSLSILVIMVPFLLILIS) traverse the membrane as a helical segment. Over 219–237 (YGFIVNTILKIPSAEGKKA) the chain is Cytoplasmic. Residues 238-258 (FVTCASHLTVVFVHYGCASII) traverse the membrane as a helical segment. The Extracellular portion of the chain corresponds to 259–271 (YLRPKSKSASDKD). A helical membrane pass occupies residues 272–292 (QLVAVTYTVVTPLLNPLVYSL). At 293 to 314 (RNKEVKTALKRVLGMPVATKMS) the chain is on the cytoplasmic side.

The protein belongs to the G-protein coupled receptor 1 family.

It is found in the cell membrane. Functionally, odorant receptor. The polypeptide is Olfactory receptor 10T2 (OR10T2) (Homo sapiens (Human)).